The following is a 413-amino-acid chain: Palmitoyl-acyl carrier protein thioesterase, chloroplastic (413 aa).

Residues 1 to 57 constitute a chloroplast transit peptide; that stretch reads MVATAVTSAFFPVTSSPDSSDSKNKKLGSIKSKPSVSSGSLQVKANAQAPPKINGTV. The segment at 12–79 is disordered; that stretch reads PVTSSPDSSD…DGASSPPPRT (68 aa). Positions 29–40 are enriched in low complexity; it reads SIKSKPSVSSGS. Residues asparagine 310, histidine 312, and cysteine 347 contribute to the active site. The interval 394 to 413 is disordered; sequence WRPKHAKSSANMDQITAKRA.

This sequence belongs to the acyl-ACP thioesterase family.

The protein localises to the plastid. The protein resides in the chloroplast. It catalyses the reaction hexadecanoyl-[ACP] + H2O = hexadecanoate + holo-[ACP] + H(+). Functionally, plays an essential role in chain termination during de novo fatty acid synthesis. High thioesterase activity for palmitoyl-ACP versus other acyl-ACPs. The chain is Palmitoyl-acyl carrier protein thioesterase, chloroplastic (FATB1) from Gossypium hirsutum (Upland cotton).